The primary structure comprises 162 residues: Transcription elongation factor GreA (162 aa).

Residues 1 to 28 (MQKEPMLEETYRKLSEELEQLKSVERGV) are a coiled coil.

This sequence belongs to the GreA/GreB family.

Necessary for efficient RNA polymerase transcription elongation past template-encoded arresting sites. The arresting sites in DNA have the property of trapping a certain fraction of elongating RNA polymerases that pass through, resulting in locked ternary complexes. Cleavage of the nascent transcript by cleavage factors such as GreA or GreB allows the resumption of elongation from the new 3'terminus. GreA releases sequences of 2 to 3 nucleotides. The polypeptide is Transcription elongation factor GreA (Sulfurovum sp. (strain NBC37-1)).